The following is a 477-amino-acid chain: tRNA-2-methylthio-N(6)-dimethylallyladenosine synthase (477 aa).

One can recognise an MTTase N-terminal domain in the interval 13 to 130; the sequence is GGLFIKTYGC…LPAMIEEALA (118 aa). Cys22, Cys59, Cys93, Cys178, Cys182, and Cys185 together coordinate [4Fe-4S] cluster. Residues 164 to 396 enclose the Radical SAM core domain; sequence ESNGVSAFVS…QAMLNEQTAA (233 aa). Positions 399–462 constitute a TRAM domain; sequence EGMVGTTQRV…ANSLKGKLVA (64 aa).

The protein belongs to the methylthiotransferase family. MiaB subfamily. As to quaternary structure, monomer. It depends on [4Fe-4S] cluster as a cofactor.

It localises to the cytoplasm. The catalysed reaction is N(6)-dimethylallyladenosine(37) in tRNA + (sulfur carrier)-SH + AH2 + 2 S-adenosyl-L-methionine = 2-methylsulfanyl-N(6)-dimethylallyladenosine(37) in tRNA + (sulfur carrier)-H + 5'-deoxyadenosine + L-methionine + A + S-adenosyl-L-homocysteine + 2 H(+). In terms of biological role, catalyzes the methylthiolation of N6-(dimethylallyl)adenosine (i(6)A), leading to the formation of 2-methylthio-N6-(dimethylallyl)adenosine (ms(2)i(6)A) at position 37 in tRNAs that read codons beginning with uridine. The sequence is that of tRNA-2-methylthio-N(6)-dimethylallyladenosine synthase from Hydrogenovibrio crunogenus (strain DSM 25203 / XCL-2) (Thiomicrospira crunogena).